We begin with the raw amino-acid sequence, 404 residues long: L-cysteine:1D-myo-inositol 2-amino-2-deoxy-alpha-D-glucopyranoside ligase (404 aa).

Position 47 (cysteine 47) interacts with Zn(2+). L-cysteinyl-5'-AMP-binding positions include cysteine 47–threonine 50, threonine 62, and asparagine 85–threonine 87. The short motif at isoleucine 49–histidine 59 is the 'HIGH' region element. Residues glutamate 188–proline 193 carry the 'ERGGDP' region motif. Tryptophan 228 serves as a coordination point for L-cysteinyl-5'-AMP. Cysteine 232 is a binding site for Zn(2+). An L-cysteinyl-5'-AMP-binding site is contributed by glycine 250–aspartate 252. Residue histidine 257 coordinates Zn(2+). Isoleucine 284 contacts L-cysteinyl-5'-AMP. The 'KMSKS' region signature appears at lysine 290–serine 294.

The protein belongs to the class-I aminoacyl-tRNA synthetase family. MshC subfamily. In terms of assembly, monomer. It depends on Zn(2+) as a cofactor.

The catalysed reaction is 1D-myo-inositol 2-amino-2-deoxy-alpha-D-glucopyranoside + L-cysteine + ATP = 1D-myo-inositol 2-(L-cysteinylamino)-2-deoxy-alpha-D-glucopyranoside + AMP + diphosphate + H(+). Catalyzes the ATP-dependent condensation of GlcN-Ins and L-cysteine to form L-Cys-GlcN-Ins. This is L-cysteine:1D-myo-inositol 2-amino-2-deoxy-alpha-D-glucopyranoside ligase from Corynebacterium striatum.